The sequence spans 217 residues: Trimethylamine corrinoid protein 2 (217 aa).

The 92-residue stretch at 1–92 (MAGKEEIIAK…EMEKRKAKTT (92 aa)) folds into the B12-binding N-terminal domain. Residues 94 to 217 (LGTVIIGTIE…VNKIKAAIKS (124 aa)) form the B12-binding domain. A methylcob(III)alamin-binding site is contributed by histidine 107.

It belongs to the methylamine corrinoid protein family. In terms of assembly, can form a complex with MttB.

It participates in one-carbon metabolism; methanogenesis from trimethylamine. Functionally, acts probably as a methyl group carrier between MttB and either MtbA or MtaA. This Methanosarcina acetivorans (strain ATCC 35395 / DSM 2834 / JCM 12185 / C2A) protein is Trimethylamine corrinoid protein 2 (mttC2).